Consider the following 290-residue polypeptide: Bifunctional protein FolD (290 aa).

NADP(+) contacts are provided by residues 165-167 (GRS), Ser190, and Ile231.

Belongs to the tetrahydrofolate dehydrogenase/cyclohydrolase family. In terms of assembly, homodimer.

It carries out the reaction (6R)-5,10-methylene-5,6,7,8-tetrahydrofolate + NADP(+) = (6R)-5,10-methenyltetrahydrofolate + NADPH. It catalyses the reaction (6R)-5,10-methenyltetrahydrofolate + H2O = (6R)-10-formyltetrahydrofolate + H(+). Its pathway is one-carbon metabolism; tetrahydrofolate interconversion. Catalyzes the oxidation of 5,10-methylenetetrahydrofolate to 5,10-methenyltetrahydrofolate and then the hydrolysis of 5,10-methenyltetrahydrofolate to 10-formyltetrahydrofolate. This Aromatoleum aromaticum (strain DSM 19018 / LMG 30748 / EbN1) (Azoarcus sp. (strain EbN1)) protein is Bifunctional protein FolD.